The chain runs to 1411 residues: DNA-directed RNA polymerase subunit beta' (1411 aa).

Residues C70, C72, C85, and C88 each coordinate Zn(2+). The Mg(2+) site is built by D460, D462, and D464. Zn(2+)-binding residues include C814, C888, C895, and C898.

Belongs to the RNA polymerase beta' chain family. The RNAP catalytic core consists of 2 alpha, 1 beta, 1 beta' and 1 omega subunit. When a sigma factor is associated with the core the holoenzyme is formed, which can initiate transcription. The cofactor is Mg(2+). Zn(2+) is required as a cofactor.

It catalyses the reaction RNA(n) + a ribonucleoside 5'-triphosphate = RNA(n+1) + diphosphate. Its function is as follows. DNA-dependent RNA polymerase catalyzes the transcription of DNA into RNA using the four ribonucleoside triphosphates as substrates. This Idiomarina loihiensis (strain ATCC BAA-735 / DSM 15497 / L2-TR) protein is DNA-directed RNA polymerase subunit beta'.